A 294-amino-acid polypeptide reads, in one-letter code: 33 kDa chaperonin (294 aa).

2 disulfides stabilise this stretch: C237–C239 and C270–C273.

This sequence belongs to the HSP33 family. Post-translationally, under oxidizing conditions two disulfide bonds are formed involving the reactive cysteines. Under reducing conditions zinc is bound to the reactive cysteines and the protein is inactive.

It is found in the cytoplasm. Functionally, redox regulated molecular chaperone. Protects both thermally unfolding and oxidatively damaged proteins from irreversible aggregation. Plays an important role in the bacterial defense system toward oxidative stress. The sequence is that of 33 kDa chaperonin from Geobacillus kaustophilus (strain HTA426).